The following is a 164-amino-acid chain: MD-2-related lipid-recognition protein 3 (164 aa).

Residues 1–24 (MAMSHVQPMLLLLVSLFFLPALRG) form the signal peptide.

As to quaternary structure, interacts with RUB1/NEDD8. In terms of processing, neddylated. Post-translationally, ubiquitinated.

It is found in the vacuole. It localises to the endoplasmic reticulum. Functionally, may be involved in herbivory-mediated responses. May play a role in herbivory-associated molecular pattern (HAMP) recognition. May function is jasmonate (JA) signaling in response to HAMP. May play a role in defense response against the pathogens Altenaria brassicicola and Pseudomonas syringae. The protein is MD-2-related lipid-recognition protein 3 of Arabidopsis thaliana (Mouse-ear cress).